The primary structure comprises 299 residues: MTEHKSGFVSIIGRPNVGKSTFMNRVIGHKIAIMSDKAQTTRNKIQGVMTRNDAQIIFLDTPGIHKPKHKLGDYMMRVAKNTLSEIDAIMFMVNVNEEIGRGDEYIMEMLKNVKTPVFLVLNKIDLVHPDALMPRIEQYQKYMNFTEIVPISALEGLNVDHFIDVLKTYLPEGPKYYPDDQISDHPEQFVVSEIIREKILHLTSEEIPHAIGVNVDRMIKENDERVRVEATIYVERDSQKGIVIGKGGKKLKEVGKRARHDIEMLLGSKVYLELWVKVQKDWRNKVNFIRQMGYIEDQD.

Residues 5-172 (KSGFVSIIGR…IDVLKTYLPE (168 aa)) form the Era-type G domain. The segment at 13 to 20 (GRPNVGKS) is G1. 13–20 (GRPNVGKS) serves as a coordination point for GTP. Positions 39–43 (QTTRN) are G2. Positions 60 to 63 (DTPG) are G3. Residues 60–64 (DTPGI) and 122–125 (NKID) contribute to the GTP site. Positions 122-125 (NKID) are G4. The interval 151–153 (ISA) is G5. Residues 203 to 280 (TSEEIPHAIG…YLELWVKVQK (78 aa)) enclose the KH type-2 domain.

This sequence belongs to the TRAFAC class TrmE-Era-EngA-EngB-Septin-like GTPase superfamily. Era GTPase family. As to quaternary structure, monomer.

Its subcellular location is the cytoplasm. It localises to the cell membrane. In terms of biological role, an essential GTPase that binds both GDP and GTP, with rapid nucleotide exchange. Plays a role in 16S rRNA processing and 30S ribosomal subunit biogenesis and possibly also in cell cycle regulation and energy metabolism. The polypeptide is GTPase Era (Staphylococcus haemolyticus (strain JCSC1435)).